The primary structure comprises 434 residues: Tol-Pal system protein TolB (434 aa).

A signal peptide spans 1 to 24; the sequence is MKFSAYLTTLFIVLFSLFIQTVQA.

This sequence belongs to the TolB family. In terms of assembly, the Tol-Pal system is composed of five core proteins: the inner membrane proteins TolA, TolQ and TolR, the periplasmic protein TolB and the outer membrane protein Pal. They form a network linking the inner and outer membranes and the peptidoglycan layer.

The protein resides in the periplasm. Functionally, part of the Tol-Pal system, which plays a role in outer membrane invagination during cell division and is important for maintaining outer membrane integrity. The sequence is that of Tol-Pal system protein TolB from Histophilus somni (strain 2336) (Haemophilus somnus).